The chain runs to 58 residues: DNA-binding protein (58 aa).

Composition is skewed to basic residues over residues 1-19 (MVRR…RSRS) and 28-58 (SRYR…NQYI). The tract at residues 1–58 (MVRRRRSRSPYRRRSRSRSRSGSDRSRSRYRSRSRSRSRSRSRARSRSPYHHHINQYI) is disordered.

Post-translationally, probably phosphorylated in infected cells.

It localises to the virion. In terms of biological role, thought to be responsible for DNA condensation during packaging of the nucleocapsids. This chain is DNA-binding protein (P7.3), found in Cryptophlebia leucotreta granulosis virus (ClGV).